Reading from the N-terminus, the 353-residue chain is Lysophosphatidic acid receptor 3 (353 aa).

Residues 1-31 (MNECHYDKHMDFFYNRSNTDTVDDWTGTKLV) are Extracellular-facing. N-linked (GlcNAc...) asparagine glycosylation occurs at Asn15. Residues 32–52 (IVLCVGTFFCLFIFFSNSLVI) traverse the membrane as a helical segment. The Cytoplasmic segment spans residues 53–67 (AAVIKNRKFHFPFYY). Residues 68–88 (LLANLAAADFFAGIAYVFLMF) traverse the membrane as a helical segment. At 89-101 (NTGPVSKTLTVNR) the chain is on the extracellular side. A helical membrane pass occupies residues 102 to 124 (WFLRQGLLDSSLTASLTNLLVIA). At 125–146 (VERHMSIMRMRVHSNLTKKRVT) the chain is on the cytoplasmic side. A helical membrane pass occupies residues 147–167 (LLILLVWAIAIFMGAVPTLGW). Over 168–186 (NCLCNISACSSLAPIYSRS) the chain is Extracellular. Asn172 is a glycosylation site (N-linked (GlcNAc...) asparagine). A helical membrane pass occupies residues 187 to 207 (YLVFWTVSNLMAFLIMVVVYL). The Cytoplasmic segment spans residues 208–240 (RIYVYVKRKTNVLSPHTSGSISRRRTPMKLMKT). Residues 241–261 (VMTVLGAFVVCWTPGLVVLLL) form a helical membrane-spanning segment. The Extracellular portion of the chain corresponds to 262–276 (DGLNCRQCGVQHVKR). A helical transmembrane segment spans residues 277-297 (WFLLLALLNSVVNPIIYSYKD). Topologically, residues 298–353 (EDMYGTMKKMICCFSQENPERRPSRIPSTVLSRSDTGSQYIEDSISQGAVCNKSTS) are cytoplasmic. Cys309 carries S-palmitoyl cysteine lipidation.

This sequence belongs to the G-protein coupled receptor 1 family. Most abundantly expressed in prostate, testes, pancreas, and heart, with moderate levels in lung and ovary. No detectable expression in brain, placenta, liver, skeletal muscle, kidney, spleen, thymus, small intestine, colon, or peripheral blood leukocytes.

Its subcellular location is the cell membrane. Functionally, receptor for lysophosphatidic acid (LPA), a mediator of diverse cellular activities. May play a role in the development of ovarian cancer. Seems to be coupled to the G(i)/G(o) and G(q) families of heteromeric G proteins. This is Lysophosphatidic acid receptor 3 (LPAR3) from Homo sapiens (Human).